A 329-amino-acid polypeptide reads, in one-letter code: Beta-ketoacyl-[acyl-carrier-protein] synthase III (329 aa).

Catalysis depends on residues cysteine 123 and histidine 256. Positions 257-261 are ACP-binding; sequence QANIR. Residue asparagine 286 is part of the active site.

Belongs to the thiolase-like superfamily. FabH family. Homodimer.

It is found in the cytoplasm. The enzyme catalyses malonyl-[ACP] + acetyl-CoA + H(+) = 3-oxobutanoyl-[ACP] + CO2 + CoA. The protein operates within lipid metabolism; fatty acid biosynthesis. Its function is as follows. Catalyzes the condensation reaction of fatty acid synthesis by the addition to an acyl acceptor of two carbons from malonyl-ACP. Catalyzes the first condensation reaction which initiates fatty acid synthesis and may therefore play a role in governing the total rate of fatty acid production. Possesses both acetoacetyl-ACP synthase and acetyl transacylase activities. Its substrate specificity determines the biosynthesis of branched-chain and/or straight-chain of fatty acids. The protein is Beta-ketoacyl-[acyl-carrier-protein] synthase III of Burkholderia orbicola (strain AU 1054).